The primary structure comprises 682 residues: DNA-directed RNA polymerase subunit beta' (682 aa).

Zn(2+)-binding residues include cysteine 69, cysteine 71, cysteine 87, and cysteine 90. Residues aspartate 489, aspartate 491, and aspartate 493 each coordinate Mg(2+).

It belongs to the RNA polymerase beta' chain family. RpoC1 subfamily. In plastids the minimal PEP RNA polymerase catalytic core is composed of four subunits: alpha, beta, beta', and beta''. When a (nuclear-encoded) sigma factor is associated with the core the holoenzyme is formed, which can initiate transcription. It depends on Mg(2+) as a cofactor. The cofactor is Zn(2+).

The protein resides in the plastid. It localises to the chloroplast. The enzyme catalyses RNA(n) + a ribonucleoside 5'-triphosphate = RNA(n+1) + diphosphate. Its function is as follows. DNA-dependent RNA polymerase catalyzes the transcription of DNA into RNA using the four ribonucleoside triphosphates as substrates. This is DNA-directed RNA polymerase subunit beta' from Oryza nivara (Indian wild rice).